The following is a 212-amino-acid chain: FMN-dependent NADH:quinone oxidoreductase (212 aa).

Residues S9, 15–17 (SVS), and 138–141 (TRGG) each bind FMN.

Belongs to the azoreductase type 1 family. In terms of assembly, homodimer. The cofactor is FMN.

The enzyme catalyses 2 a quinone + NADH + H(+) = 2 a 1,4-benzosemiquinone + NAD(+). It catalyses the reaction N,N-dimethyl-1,4-phenylenediamine + anthranilate + 2 NAD(+) = 2-(4-dimethylaminophenyl)diazenylbenzoate + 2 NADH + 2 H(+). In terms of biological role, quinone reductase that provides resistance to thiol-specific stress caused by electrophilic quinones. Its function is as follows. Also exhibits azoreductase activity. Catalyzes the reductive cleavage of the azo bond in aromatic azo compounds to the corresponding amines. The sequence is that of FMN-dependent NADH:quinone oxidoreductase from Delftia acidovorans (strain DSM 14801 / SPH-1).